The following is a 491-amino-acid chain: Nuatigenin 3-beta-glucosyltransferase (491 aa).

His-20 (proton acceptor) is an active-site residue. Residue His-20 coordinates an anthocyanidin. The Charge relay role is filled by Asp-125. 7 residues coordinate UDP-alpha-D-glucose: Ala-352, Gln-354, His-369, Trp-372, Asn-373, Ser-374, and Glu-377. Ala-392 is an an anthocyanidin binding site. Residues Glu-393 and Gln-394 each contribute to the UDP-alpha-D-glucose site.

It belongs to the UDP-glycosyltransferase family. In terms of tissue distribution, expressed in roots, stems and leaves.

It catalyses the reaction nuatigenin + UDP-alpha-D-glucose = nuatigenin 3-beta-D-glucopyranoside + UDP + H(+). It carries out the reaction diosgenin + UDP-alpha-D-glucose = diosgenin 3-O-beta-D-glucoside + UDP + H(+). The enzyme catalyses tigogenin + UDP-alpha-D-glucose = tigogenin 3-O-beta-D-glucopyranoside + UDP + H(+). The catalysed reaction is solasodine + UDP-alpha-D-glucose = solasodine 3-beta-D-glucoside + UDP + H(+). It catalyses the reaction solanidine + UDP-alpha-D-glucose = solanidine 3-O-beta-D-glucopyranoside + UDP + H(+). It carries out the reaction tomatidine + UDP-alpha-D-glucose = tomatidine 3-O-beta-D-glucopyranoside + UDP + H(+). Its function is as follows. Glucosyltransferase involved in steroid saponin biosynthesis. Catalyzes the 3-O-glucosylation of steroidal sapogenins, such as diosgenin, nuatigenin and tigogenin. Can glucosylate steroidal alkaloids, such as solanidine, solasodine and tomatidine. This Solanum aculeatissimum (Dutch eggplant) protein is Nuatigenin 3-beta-glucosyltransferase.